The sequence spans 597 residues: Arginine--tRNA ligase (597 aa).

The short motif at 125 to 135 (PNTNKPLHLGH) is the 'HIGH' region element.

The protein belongs to the class-I aminoacyl-tRNA synthetase family. In terms of assembly, monomer.

Its subcellular location is the cytoplasm. It catalyses the reaction tRNA(Arg) + L-arginine + ATP = L-arginyl-tRNA(Arg) + AMP + diphosphate. The polypeptide is Arginine--tRNA ligase (Bacteroides fragilis (strain ATCC 25285 / DSM 2151 / CCUG 4856 / JCM 11019 / LMG 10263 / NCTC 9343 / Onslow / VPI 2553 / EN-2)).